A 546-amino-acid chain; its full sequence is CTP synthase (546 aa).

An amidoligase domain region spans residues 1-266 (MTTRYIFVTG…DQLVTKRFGI (266 aa)). Ser14 serves as a coordination point for CTP. Ser14 is a UTP binding site. Residues 15 to 20 (SLGKGI) and Asp72 contribute to the ATP site. Residues Asp72 and Glu140 each contribute to the Mg(2+) site. Residues 147–149 (DIE), 187–192 (KTKPTQ), and Lys223 contribute to the CTP site. UTP is bound by residues 187 to 192 (KTKPTQ) and Lys223. Position 239–241 (239–241 (KDV)) interacts with ATP. Residues 291–542 (TIGMVGKYIE…VAAAAAYQKR (252 aa)) form the Glutamine amidotransferase type-1 domain. Gly352 contributes to the L-glutamine binding site. Cys379 (nucleophile; for glutamine hydrolysis) is an active-site residue. L-glutamine-binding positions include 380–383 (LGMQ), Glu403, and Arg470. Residues His515 and Glu517 contribute to the active site.

It belongs to the CTP synthase family. Homotetramer.

The enzyme catalyses UTP + L-glutamine + ATP + H2O = CTP + L-glutamate + ADP + phosphate + 2 H(+). The catalysed reaction is L-glutamine + H2O = L-glutamate + NH4(+). It catalyses the reaction UTP + NH4(+) + ATP = CTP + ADP + phosphate + 2 H(+). The protein operates within pyrimidine metabolism; CTP biosynthesis via de novo pathway; CTP from UDP: step 2/2. Allosterically activated by GTP, when glutamine is the substrate; GTP has no effect on the reaction when ammonia is the substrate. The allosteric effector GTP functions by stabilizing the protein conformation that binds the tetrahedral intermediate(s) formed during glutamine hydrolysis. Inhibited by the product CTP, via allosteric rather than competitive inhibition. Its function is as follows. Catalyzes the ATP-dependent amination of UTP to CTP with either L-glutamine or ammonia as the source of nitrogen. Regulates intracellular CTP levels through interactions with the four ribonucleotide triphosphates. In Shewanella pealeana (strain ATCC 700345 / ANG-SQ1), this protein is CTP synthase.